The following is a 115-amino-acid chain: Skin calcitonin gene-related peptide (115 aa).

An N-terminal signal peptide occupies residues 1–25; that stretch reads MVLLKISSLLAVLGLLVCQMYSSQA. Positions 26 to 69 are cleaved as a propeptide — removed in mature form by a carboxypeptidase; sequence APARRALEPLPDRVTEAHRLLRALIRELTAEDMEASSSGAAHKR. A disulfide bridge connects residues cysteine 71 and cysteine 76. The residue at position 106 (phenylalanine 106) is a Phenylalanine amide. A propeptide spans 107-115 (removed in mature form by an endoprotease); sequence GRRRRSLHV.

Skin, intestine and brain.

The protein localises to the secreted. Functionally, CGRP induces vasodilation. It dilates a variety of vessels including the coronary, cerebral and systemic vasculature. Its abundance in the CNS also points toward a neurotransmitter or neuromodulator role. The chain is Skin calcitonin gene-related peptide from Phyllomedusa bicolor (Two-colored leaf frog).